We begin with the raw amino-acid sequence, 143 residues long: Adrenodoxin, mitochondrial (143 aa).

A mitochondrion-targeting transit peptide spans 1 to 19; the sequence is CSAVAVRTLRPLSLSARAA. The 2Fe-2S ferredoxin-type domain occupies 26-130; sequence ITVHFINRDG…NMTVRVPEAV (105 aa). [2Fe-2S] cluster is bound by residues cysteine 65, cysteine 71, cysteine 74, and cysteine 111.

This sequence belongs to the adrenodoxin/putidaredoxin family. [2Fe-2S] cluster serves as cofactor.

The protein localises to the mitochondrion matrix. Its function is as follows. Essential for the synthesis of various steroid hormones. Participates in the reduction of mitochondrial cytochrome P450 for steroidogenesis. Transfers electrons from adrenodoxin reductase to CYP11A1, a cytochrome P450 that catalyzes cholesterol side-chain cleavage. Does not form a ternary complex with adrenodoxin reductase and CYP11A1 but shuttles between the two enzymes to transfer electrons. This is Adrenodoxin, mitochondrial (FDX1) from Gallus gallus (Chicken).